Here is a 336-residue protein sequence, read N- to C-terminus: MYYSLVRKALFRLDPERAHDFTFRQLKRLSHSPFQFLIQQSLPAKPVSCMGLSFKNPLGLAAGLDKNGDCIDALGAMGFGFIEVGTVTPRAQVGNDKPRLFRLVEAEGLINRMGFNNLGVDNLIENVKQSQYGGVLGINIGKNKDTPVEQGKDDYLICMEKVYPYAGYIAINISSPNTPGLRTLQYGEALDDLLSAIKNKQLELQGKYQKYVPVAVKIAPDLTHEELIQVADSLVRHHIDGVIATNTTLDKSLVSGLDHCNEAGGLSGRPVQSKSTQIIRQLNEELKGALPIIGVGGIDSLTAAREKMDAGASLIQVYSGFIYHGPALIKSIINHI.

FMN contacts are provided by residues 62 to 66 and Thr-86; that span reads AGLDK. Lys-66 serves as a coordination point for substrate. Position 111–115 (111–115) interacts with substrate; it reads NRMGF. Asn-139 and Asn-172 together coordinate FMN. Asn-172 is a binding site for substrate. The Nucleophile role is filled by Ser-175. A substrate-binding site is contributed by Asn-177. Residues Lys-217 and Thr-245 each contribute to the FMN site. Residue 246-247 participates in substrate binding; the sequence is NT. Residues Gly-268, Gly-297, and 318-319 contribute to the FMN site; that span reads YS.

This sequence belongs to the dihydroorotate dehydrogenase family. Type 2 subfamily. Monomer. Requires FMN as cofactor.

The protein localises to the cell membrane. It carries out the reaction (S)-dihydroorotate + a quinone = orotate + a quinol. It participates in pyrimidine metabolism; UMP biosynthesis via de novo pathway; orotate from (S)-dihydroorotate (quinone route): step 1/1. Catalyzes the conversion of dihydroorotate to orotate with quinone as electron acceptor. This is Dihydroorotate dehydrogenase (quinone) from Proteus mirabilis (strain HI4320).